An 878-amino-acid polypeptide reads, in one-letter code: MLKNPFIKDSGLNQYQPLINQINALETNLKTLTDTELRNKTFELKKRYQEEQDLNALTAEAFAITREASFRTLGLRHFDVQLIGGLVLNSGKISEMRTGEGKTLVATLPAYLNALTDKGVHIVTVNDYLASRDQISMGQIYRFLGLDTGLIQEDMAFLERQQNYKAEITYVTNNEVAFDYLRDNMASNLSQVVLPPFNYCIVDEVDSIFIDEAQVPLIISQAVETCIDKYIVAAEVAEYLEVNVHFKVDEKNRNIILTEQGTAQIEKILQVEDLYNPNDPWIPYILSAIKATALFFRNVHYIVQNNQIIIVDEFTGRIMPDRRWNEGLHQAVEAKEGVPIRQNTETAASITYQNFFLLYPKLSGMTGTAKTSEVEFEKIYNLPVEEIPTARPNLRKDLPDFVYKDSLTKWTAIARECKSIANTKQPILIGTTTVENSEMLADLLQEYQLSYRLLNAKPENVKRESEIVAQAGEIGSITIATNMAGRGTDIILGGNTTFKVRKQLYNILVSYKSKTNLTKLNTIFPLAIDIKFTSQKFLSVLNSLLNDPKFLSLSSTGILKFLNEIDQIRIPKITYQCSIKFLLNELSKFEKKNQTIDNKIVKNLGGLYIIGTERNNSRRIDNQLRGRCGRQGDPGTSRFFLSLEDSLFRNFGSSKLQNFMQNQLLDDLPLESNLLTKSLDAAQKRVEERDYDGRKYLFDYDDILNKQRNIVYYERRKLLESQSLRETILAYGEQVIKDIITLLKDPKFPKTNSMIEELFKTRLVSLNSDLNSLDSFELKTYLFQEFWLSYETKVLEFEICQTGLIRSFERTIILYYTDIAWKEHLQKIALLRDAVGWRSYGQRNPLFEFKEEAYNLFQNRNITIRHLLIRDFLHSFIL.

Residues Gln-81, 99 to 103 (GEGKT), and Asp-489 each bind ATP.

The protein belongs to the SecA family.

It is found in the plastid. The protein localises to the chloroplast stroma. Its subcellular location is the chloroplast thylakoid membrane. The catalysed reaction is ATP + H2O + cellular proteinSide 1 = ADP + phosphate + cellular proteinSide 2.. In terms of biological role, has a central role in coupling the hydrolysis of ATP to the transfer of proteins across the thylakoid membrane. The polypeptide is Protein translocase subunit SecA (Thalassiosira pseudonana (Marine diatom)).